The sequence spans 204 residues: Dihydroorotase (204 aa).

A Zn(2+)-binding site is contributed by H34. A substrate-binding site is contributed by L79. Position 107 (D107) interacts with Zn(2+). D107 is an active-site residue. Residues H111 and A123 each coordinate substrate.

The protein belongs to the metallo-dependent hydrolases superfamily. DHOase family. Class II DHOase subfamily. In terms of assembly, homodimer. The cofactor is Zn(2+).

The catalysed reaction is (S)-dihydroorotate + H2O = N-carbamoyl-L-aspartate + H(+). The protein operates within pyrimidine metabolism; UMP biosynthesis via de novo pathway; (S)-dihydroorotate from bicarbonate: step 3/3. Functionally, catalyzes the reversible cyclization of carbamoyl aspartate to dihydroorotate. The polypeptide is Dihydroorotase (Serratia marcescens).